A 272-amino-acid chain; its full sequence is Putative MgpC-like protein MPN_102 (272 aa).

It belongs to the MgpC family.

The protein is Putative MgpC-like protein MPN_102 of Mycoplasma pneumoniae (strain ATCC 29342 / M129 / Subtype 1) (Mycoplasmoides pneumoniae).